A 79-amino-acid polypeptide reads, in one-letter code: Cyclin-dependent kinases regulatory subunit 2 (79 aa).

N6-acetyllysine is present on Lys-4.

The protein belongs to the CKS family. As to quaternary structure, forms a homohexamer that can probably bind six kinase subunits.

Binds to the catalytic subunit of the cyclin dependent kinases and is essential for their biological function. This Mus musculus (Mouse) protein is Cyclin-dependent kinases regulatory subunit 2 (Cks2).